The sequence spans 478 residues: Zinc metalloproteinase/disintegrin (478 aa).

Positions 1 to 20 (MIQVLLVTICLAVFPYQGSS) are cleaved as a signal peptide. Residues 21 to 194 (KTLKSGNVND…KASQLNLTPE (174 aa)) constitute a propeptide that is removed on maturation. Residue Gln-195 is modified to Pyrrolidone carboxylic acid. The 197-residue stretch at 201–397 (RYIELVIVAD…RNPQCILNQP (197 aa)) folds into the Peptidase M12B domain. Positions 204 and 288 each coordinate Ca(2+). Disulfide bonds link Cys-312-Cys-392, Cys-352-Cys-376, and Cys-354-Cys-359. His-337 lines the Zn(2+) pocket. Glu-338 is a catalytic residue. Residues His-341 and His-347 each coordinate Zn(2+). Ca(2+) is bound by residues Cys-392 and Asn-395. A propeptide spanning residues 398–413 (LRTDTVSTPVSGNELL) is cleaved from the precursor. The 74-residue stretch at 405-478 (TPVSGNELLQ…SDCPRNPYKD (74 aa)) folds into the Disintegrin domain. Intrachain disulfides connect Cys-420-Cys-443, Cys-434-Cys-440, Cys-439-Cys-464, and Cys-452-Cys-471. The Cell attachment site; atypical (VGD) signature appears at 456–458 (VGD).

This sequence belongs to the venom metalloproteinase (M12B) family. P-II subfamily. P-IIe sub-subfamily. Monomer (metalloproteinase). Heterodimer; disulfide-linked (disintegrin). Zn(2+) serves as cofactor. As to expression, expressed by the venom gland.

It is found in the secreted. Fibrinolytic and caseinolytic activities are inhibited by Cd(2+), Cu(2+) and Co(2+) ions. Not inhibited by Mg(2+), Ca(2+) and Ba(2+). Also inhibited by EDTA, EGTA and 1,10-phenanthroline. Functionally, fibrinolytic and fibrinogenolytic metalloproteinase that hydrolyzes the Aalpha-chain and more slowly the Bbeta-chain of fibrin and fibrinogen. Its fibrinolytic activity is direct, without any plasminogen activation. Also hydrolyzes casein and B-chain of oxidized insulin. Inhibits ADP-induced and collagen-induced platelet aggregation. Shows low hemorrhagic activity. Cleaves the plasma proteinase inhibitors alpha(2)-macroglobulin (A2M) and pregnancy zone protein (PZP), and is inhibited by them. The metalloprotease has no strict P1-P1' specificity requirement. Hydrolysis at sites with a Pro residue at P1 is observed with bradykinin, substance P, PZP and alpha chain fibrinogen (FGA). In terms of biological role, poor inhibitor of platelet aggregation. The disintegrin inhibits the adhesion of the alpha-4/beta-1 (ITGA4/ITGB1) integrin to VCAM-1. Inhibition on alpha-2b/beta-3 (ITGA2B/ITGB3) is low. The protein is Zinc metalloproteinase/disintegrin of Macrovipera lebetinus (Levantine viper).